Consider the following 188-residue polypeptide: Elongation factor P (188 aa).

This sequence belongs to the elongation factor P family.

The protein localises to the cytoplasm. The protein operates within protein biosynthesis; polypeptide chain elongation. In terms of biological role, involved in peptide bond synthesis. Stimulates efficient translation and peptide-bond synthesis on native or reconstituted 70S ribosomes in vitro. Probably functions indirectly by altering the affinity of the ribosome for aminoacyl-tRNA, thus increasing their reactivity as acceptors for peptidyl transferase. The chain is Elongation factor P from Bifidobacterium longum (strain DJO10A).